A 158-amino-acid polypeptide reads, in one-letter code: 2-C-methyl-D-erythritol 2,4-cyclodiphosphate synthase (158 aa).

Residues D9 and H11 each contribute to the a divalent metal cation site. 4-CDP-2-C-methyl-D-erythritol 2-phosphate-binding positions include 9 to 11 (DVH) and 35 to 36 (HS). Residue H43 participates in a divalent metal cation binding. Residues 57-59 (DIG), 62-66 (FPDTD), 101-107 (AQKPKML), 133-136 (TTTE), F140, and R143 each bind 4-CDP-2-C-methyl-D-erythritol 2-phosphate.

Belongs to the IspF family. As to quaternary structure, homotrimer. A divalent metal cation serves as cofactor.

It carries out the reaction 4-CDP-2-C-methyl-D-erythritol 2-phosphate = 2-C-methyl-D-erythritol 2,4-cyclic diphosphate + CMP. It participates in isoprenoid biosynthesis; isopentenyl diphosphate biosynthesis via DXP pathway; isopentenyl diphosphate from 1-deoxy-D-xylulose 5-phosphate: step 4/6. Functionally, involved in the biosynthesis of isopentenyl diphosphate (IPP) and dimethylallyl diphosphate (DMAPP), two major building blocks of isoprenoid compounds. Catalyzes the conversion of 4-diphosphocytidyl-2-C-methyl-D-erythritol 2-phosphate (CDP-ME2P) to 2-C-methyl-D-erythritol 2,4-cyclodiphosphate (ME-CPP) with a corresponding release of cytidine 5-monophosphate (CMP). This chain is 2-C-methyl-D-erythritol 2,4-cyclodiphosphate synthase, found in Bacillus subtilis (strain 168).